We begin with the raw amino-acid sequence, 577 residues long: Monooxygenase PC-14 (577 aa).

Belongs to the FMO family. The cofactor is FAD.

The protein operates within secondary metabolite biosynthesis. In terms of biological role, monooxygenase; part of the gene cluster that mediates the biosynthesis of the indole diterpenes penitrems. The geranylgeranyl diphosphate (GGPP) synthase penG catalyzes the first step in penitrem biosynthesis via conversion of farnesyl pyrophosphate and isopentyl pyrophosphate into geranylgeranyl pyrophosphate (GGPP). Condensation of indole-3-glycerol phosphate with GGPP by the prenyl transferase penC then forms 3-geranylgeranylindole (3-GGI). Epoxidation by the FAD-dependent monooxygenase penM leads to a epoxidized-GGI that is substrate of the terpene cyclase penB for cyclization to yield paspaline. Paspaline is subsequently converted to 13-desoxypaxilline by the cytochrome P450 monooxygenase penP, the latter being then converted to paxilline by the cytochrome P450 monooxygenase penQ. Paxilline is converted to beta-paxitriol via C-10 ketoreduction by the short-chain dehydrogenase PC-15 which can be monoprenylated at the C-20 by the indole diterpene prenyltransferase penD. A two-step elimination (acetylation and elimination) process performed by the O-acetyltransferase PC-16 and the P.simplicissimum ptmI-ortholog not yet identified in P.crustosum, leads to the production of the prenylated form of penijanthine. The FAD-linked oxidoreductase ptmO then converts the prenylated form of penijanthine into PC-M5 which is in turn transformed into PC-M4 by the aromatic dimethylallyltransferase PC-22. A series of oxidation steps involving 4 cytochrome P450 monooxygenases (PC-21, PC-05, PC-23, PC-20) and a FAD-dependent monooxygenase (PC-14) are required for the transformation of PC-M4 to penitrems A and E. Synthesis of these final products is proposed to proceed via penitrems D and C (PC-21, PC-05, PC-14) and penitrems B and F (PC-21, PC-05, PC-14, PC-23). The protein is Monooxygenase PC-14 of Penicillium crustosum (Blue mold fungus).